The sequence spans 96 residues: NADH-ubiquinone oxidoreductase chain 4L (96 aa).

3 consecutive transmembrane segments (helical) span residues 1–21 (MPTT…SLQR), 27–47 (LLLT…LWAL), and 57–77 (APLI…SLMI).

The protein belongs to the complex I subunit 4L family.

The protein resides in the mitochondrion membrane. It catalyses the reaction a ubiquinone + NADH + 5 H(+)(in) = a ubiquinol + NAD(+) + 4 H(+)(out). Core subunit of the mitochondrial membrane respiratory chain NADH dehydrogenase (Complex I) which catalyzes electron transfer from NADH through the respiratory chain, using ubiquinone as an electron acceptor. Part of the enzyme membrane arm which is embedded in the lipid bilayer and involved in proton translocation. The protein is NADH-ubiquinone oxidoreductase chain 4L (MT-ND4L) of Petromyzon marinus (Sea lamprey).